The following is a 485-amino-acid chain: Adenosylhomocysteinase (485 aa).

Substrate contacts are provided by T64, D139, and E205. 206 to 208 (TTT) is an NAD(+) binding site. The substrate site is built by K235 and D239. Residues N240, 269-274 (GYGDVG), E292, N327, 348-350 (IGH), and N397 each bind NAD(+).

Belongs to the adenosylhomocysteinase family. It depends on NAD(+) as a cofactor.

The enzyme catalyses S-adenosyl-L-homocysteine + H2O = L-homocysteine + adenosine. The protein operates within amino-acid biosynthesis; L-homocysteine biosynthesis; L-homocysteine from S-adenosyl-L-homocysteine: step 1/1. Its function is as follows. Adenosylhomocysteine is a competitive inhibitor of S-adenosyl-L-methionine-dependent methyl transferase reactions; therefore adenosylhomocysteinase may play a key role in the control of methylations via regulation of the intracellular concentration of adenosylhomocysteine. The chain is Adenosylhomocysteinase (SAHH) from Nicotiana sylvestris (Wood tobacco).